The following is a 158-amino-acid chain: 2-C-methyl-D-erythritol 2,4-cyclodiphosphate synthase (158 aa).

Residues Asp9 and His11 each contribute to the a divalent metal cation site. 4-CDP-2-C-methyl-D-erythritol 2-phosphate-binding positions include 9–11 and 35–36; these read DVH and HS. His43 serves as a coordination point for a divalent metal cation. 4-CDP-2-C-methyl-D-erythritol 2-phosphate is bound by residues 57-59, 62-66, 101-107, 133-136, Phe140, and Arg143; these read DIG, FPDTD, AQKPKMA, and TTTE.

This sequence belongs to the IspF family. Homotrimer. The cofactor is a divalent metal cation.

The enzyme catalyses 4-CDP-2-C-methyl-D-erythritol 2-phosphate = 2-C-methyl-D-erythritol 2,4-cyclic diphosphate + CMP. It participates in isoprenoid biosynthesis; isopentenyl diphosphate biosynthesis via DXP pathway; isopentenyl diphosphate from 1-deoxy-D-xylulose 5-phosphate: step 4/6. Involved in the biosynthesis of isopentenyl diphosphate (IPP) and dimethylallyl diphosphate (DMAPP), two major building blocks of isoprenoid compounds. Catalyzes the conversion of 4-diphosphocytidyl-2-C-methyl-D-erythritol 2-phosphate (CDP-ME2P) to 2-C-methyl-D-erythritol 2,4-cyclodiphosphate (ME-CPP) with a corresponding release of cytidine 5-monophosphate (CMP). The protein is 2-C-methyl-D-erythritol 2,4-cyclodiphosphate synthase of Bacillus thuringiensis subsp. konkukian (strain 97-27).